The primary structure comprises 61 residues: Small ribosomal subunit protein uS14 (61 aa).

Zn(2+) is bound by residues C24, C27, C40, and C43.

Belongs to the universal ribosomal protein uS14 family. Zinc-binding uS14 subfamily. In terms of assembly, part of the 30S ribosomal subunit. Contacts proteins S3 and S10. Zn(2+) is required as a cofactor.

Functionally, binds 16S rRNA, required for the assembly of 30S particles and may also be responsible for determining the conformation of the 16S rRNA at the A site. In Thermus aquaticus, this protein is Small ribosomal subunit protein uS14.